The following is a 208-amino-acid chain: 2-phospho-L-lactate guanylyltransferase (208 aa).

It belongs to the CofC family. In terms of assembly, homodimer.

The catalysed reaction is (2S)-2-phospholactate + GTP + H(+) = (2S)-lactyl-2-diphospho-5'-guanosine + diphosphate. Its pathway is cofactor biosynthesis; coenzyme F420 biosynthesis. In terms of biological role, guanylyltransferase that catalyzes the activation of (2S)-2-phospholactate (2-PL) as (2S)-lactyl-2-diphospho-5'-guanosine, via the condensation of 2-PL with GTP. It is involved in the biosynthesis of coenzyme F420, a hydride carrier cofactor. This Methanosarcina mazei (strain ATCC BAA-159 / DSM 3647 / Goe1 / Go1 / JCM 11833 / OCM 88) (Methanosarcina frisia) protein is 2-phospho-L-lactate guanylyltransferase.